The following is a 346-amino-acid chain: MNSEKNSISYRDAGVDIEAGDALVERIKPFAKRTMRPEVLGGIGGFGSLFEVPKKFKNPVLVSGTDGVGTKLKLAFQLNKHDTVGIDLVAMSVNDILVQGAEPLFFLDYFACGKLDVDTAAQVVQGIAAGCEQSGCALVGGETAEMPGMYPAGEYDLAGFVVGAADKDALIDGSTIAEGDVVLGLASNGAHSNGYSLVRKLIDLSGVDLESDFYGRPFRDVVMAPTRIYVKPILKLLQAIKVKGMAHITGGGITENVPRVLPEGLTAEVRQGSWEIPPLFSWLQEQGNITDQEMYRTFNCGIGMVVIVSAQDVAAAKALLSAEGEQVWEIGRIRAQGAGEAQTVVV.

This sequence belongs to the AIR synthase family.

The protein resides in the cytoplasm. It catalyses the reaction 2-formamido-N(1)-(5-O-phospho-beta-D-ribosyl)acetamidine + ATP = 5-amino-1-(5-phospho-beta-D-ribosyl)imidazole + ADP + phosphate + H(+). Its pathway is purine metabolism; IMP biosynthesis via de novo pathway; 5-amino-1-(5-phospho-D-ribosyl)imidazole from N(2)-formyl-N(1)-(5-phospho-D-ribosyl)glycinamide: step 2/2. This chain is Phosphoribosylformylglycinamidine cyclo-ligase, found in Methylobacillus flagellatus (strain ATCC 51484 / DSM 6875 / VKM B-1610 / KT).